We begin with the raw amino-acid sequence, 283 residues long: Formamidopyrimidine-DNA glycosylase (283 aa).

Catalysis depends on proline 2, which acts as the Schiff-base intermediate with DNA. Catalysis depends on glutamate 3, which acts as the Proton donor. Catalysis depends on lysine 61, which acts as the Proton donor; for beta-elimination activity. DNA-binding residues include histidine 94, arginine 113, and lysine 159. The FPG-type zinc-finger motif lies at 245 to 279 (DAYGREGESCRRCGAVMRREKFMNRSSFYCPKCQP). The Proton donor; for delta-elimination activity role is filled by arginine 269.

The protein belongs to the FPG family. Monomer. The cofactor is Zn(2+).

The enzyme catalyses Hydrolysis of DNA containing ring-opened 7-methylguanine residues, releasing 2,6-diamino-4-hydroxy-5-(N-methyl)formamidopyrimidine.. The catalysed reaction is 2'-deoxyribonucleotide-(2'-deoxyribose 5'-phosphate)-2'-deoxyribonucleotide-DNA = a 3'-end 2'-deoxyribonucleotide-(2,3-dehydro-2,3-deoxyribose 5'-phosphate)-DNA + a 5'-end 5'-phospho-2'-deoxyribonucleoside-DNA + H(+). In terms of biological role, involved in base excision repair of DNA damaged by oxidation or by mutagenic agents. Acts as a DNA glycosylase that recognizes and removes damaged bases. Has a preference for oxidized purines, such as 7,8-dihydro-8-oxoguanine (8-oxoG). Has AP (apurinic/apyrimidinic) lyase activity and introduces nicks in the DNA strand. Cleaves the DNA backbone by beta-delta elimination to generate a single-strand break at the site of the removed base with both 3'- and 5'-phosphates. The protein is Formamidopyrimidine-DNA glycosylase of Mycolicibacterium paratuberculosis (strain ATCC BAA-968 / K-10) (Mycobacterium paratuberculosis).